Consider the following 369-residue polypeptide: Biglycan (369 aa).

The N-terminal stretch at 1–16 (MRPLWLLTLLLALSQA) is a signal peptide. The propeptide occupies 17–37 (LPFEQKGFWDFTLDDGLLMMN). 2 O-linked (Xyl...) (glycosaminoglycan) serine glycosylation sites follow: Ser42 and Ser48. Intrachain disulfides connect Cys64–Cys70 and Cys68–Cys77. LRR repeat units follow at residues 83–103 (KTVPKEISPDTTLLDLQNNDI), 104–127 (SELRKDDFKGLQHLYALVLVNNKI), 128–151 (SKIHEKAFSPLRKLQKLYISKNHL), 152–172 (VEIPPNLPSSLVELRIHDNRI), 173–196 (RKVPKGVFSGLRNMNCIEMGGNPL), 197–221 (ENSGFEPGAFDGLKLNYLRISEAKL), 222–242 (TGIPKDLPETLNELHLDHNKI), 243–266 (QAIELEDLLRYSKLYRLGLGHNQI), 267–290 (RMIENGSLSFLPTLRELHLDNNKL), 291–313 (SRVPAGLPDLKLLQVVYLHSNNI), 314–343 (TKVGINDFCPMGFGVKRAYYNGISLFNNPV), and 344–369 (PYWEVQPATFRCVTDRLAIQFGNYKK). N-linked (GlcNAc...) asparagine glycans are attached at residues Asn271 and Asn312. Cysteines 322 and 355 form a disulfide.

The protein belongs to the small leucine-rich proteoglycan (SLRP) family. SLRP class I subfamily. Homodimer. Forms a ternary complex with MFAP2 and ELN. In terms of processing, the two attached glycosaminoglycan chains can be either chondroitin sulfate or dermatan sulfate. Found in several connective tissues, especially in articular cartilages.

It is found in the secreted. The protein resides in the extracellular space. It localises to the extracellular matrix. May be involved in collagen fiber assembly. This is Biglycan (Bgn) from Rattus norvegicus (Rat).